The following is a 339-amino-acid chain: Replication factor C subunit 2 (339 aa).

An ATP-binding site is contributed by 48 to 55; it reads YGPPGTGK.

Belongs to the activator 1 small subunits family. Heterotetramer of subunits RFC2, RFC3, RFC4 and RFC5 that can form a complex with RFC1. Expressed in roots, leaves, shoot apical meristem (SAM), flag leaves and panicles.

It localises to the nucleus. In terms of biological role, may be involved in DNA replication and thus regulate cell proliferation. This is Replication factor C subunit 2 (RFC2) from Oryza sativa subsp. japonica (Rice).